The following is a 1046-amino-acid chain: Translation initiation factor IF-2 (1046 aa).

A disordered region spans residues 49–450; the sequence is ALQQGNGGKA…GVMLPRGNGQ (402 aa). Composition is skewed to low complexity over residues 57–80 and 89–106; these read KAAP…ARPA and PAAA…AAPA. The segment covering 107 to 128 has biased composition (pro residues); that stretch reads APGPRPGPKPAPRPAPAAPAPA. Over residues 129-169 the composition is skewed to low complexity; that stretch reads APEFTAPPSAPAAPAAAASGPRPGARPGAPKPGGARPATPG. Over residues 177–194 the composition is skewed to basic and acidic residues; that stretch reads RGERTDRGDRGDRGDRQG. Over residues 195–214 the composition is skewed to low complexity; the sequence is AARPGGQAPRPGARPAGPRP. Composition is skewed to gly residues over residues 239 to 248 and 266 to 280; these read PRPGGAGAPG and GGPG…GPGG. Residues 302–318 show a composition bias toward low complexity; it reads GNRPNPGMMPQRPAAGP. The segment covering 319 to 414 has biased composition (gly residues); the sequence is RPGGGGPGGR…GTQGAFGRPG (96 aa). Basic residues predominate over residues 418 to 427; it reads RRGRKSKRQR. The region spanning 539–711 is the tr-type G domain; that stretch reads ARPPVVTVMG…VVLTADASLD (173 aa). The G1 stretch occupies residues 548 to 555; the sequence is GHVDHGKT. A GTP-binding site is contributed by 548 to 555; sequence GHVDHGKT. Residues 573 to 577 form a G2 region; the sequence is GITQH. Residues 598–601 are G3; the sequence is DTPG. Residues 598-602 and 652-655 each bind GTP; these read DTPGH and NKID. The G4 stretch occupies residues 652–655; it reads NKID. Residues 688-690 form a G5 region; that stretch reads SAK.

Belongs to the TRAFAC class translation factor GTPase superfamily. Classic translation factor GTPase family. IF-2 subfamily.

It is found in the cytoplasm. One of the essential components for the initiation of protein synthesis. Protects formylmethionyl-tRNA from spontaneous hydrolysis and promotes its binding to the 30S ribosomal subunits. Also involved in the hydrolysis of GTP during the formation of the 70S ribosomal complex. The protein is Translation initiation factor IF-2 of Streptomyces avermitilis (strain ATCC 31267 / DSM 46492 / JCM 5070 / NBRC 14893 / NCIMB 12804 / NRRL 8165 / MA-4680).